We begin with the raw amino-acid sequence, 880 residues long: Alanine--tRNA ligase (880 aa).

Zn(2+) contacts are provided by H558, H562, C663, and H667.

It belongs to the class-II aminoacyl-tRNA synthetase family. The cofactor is Zn(2+).

The protein localises to the cytoplasm. It carries out the reaction tRNA(Ala) + L-alanine + ATP = L-alanyl-tRNA(Ala) + AMP + diphosphate. Functionally, catalyzes the attachment of alanine to tRNA(Ala) in a two-step reaction: alanine is first activated by ATP to form Ala-AMP and then transferred to the acceptor end of tRNA(Ala). Also edits incorrectly charged Ser-tRNA(Ala) and Gly-tRNA(Ala) via its editing domain. The polypeptide is Alanine--tRNA ligase (Mycoplasmopsis agalactiae (strain NCTC 10123 / CIP 59.7 / PG2) (Mycoplasma agalactiae)).